Here is an 85-residue protein sequence, read N- to C-terminus: Large ribosomal subunit protein bL27 (85 aa).

The segment at 1–20 (MAHKKAGGSTRNGRDSEAKR) is disordered.

It belongs to the bacterial ribosomal protein bL27 family.

This chain is Large ribosomal subunit protein bL27, found in Cronobacter sakazakii (strain ATCC BAA-894) (Enterobacter sakazakii).